Consider the following 258-residue polypeptide: UPF0246 protein MS0374 (258 aa).

The protein belongs to the UPF0246 family.

The chain is UPF0246 protein MS0374 from Mannheimia succiniciproducens (strain KCTC 0769BP / MBEL55E).